A 742-amino-acid polypeptide reads, in one-letter code: MSEAEAPLITEEAAERGLASSGSRRLSDGAGGQGSRKYRRRSDALAYGDRYQKAAALVDLAEDGVGIPEDVLNDTRFGRAMSFYFVYLRLDWLWSLNLFALILLNFLEKPLWCRKDALQAYDQRDLYFLGQLPYFSKTESLIYEGLTLVILVMDIFCPLSYEGLNIFWRSTTNKLKIVLLFILACDILVFAFSSQPFRLAPYIRVVFLIMTIRELRMCAITLAGLIGTYLNVLALSLLFLLFASWLAYVTFEDTPQGKTIFSSYGVTLYQMFVLFTTSNNPDVWVHAYKIPRWYSLFFIVYVLLGVYFLTNLILAVIYDSFKEQFAKQLVQVDSIRKNILQKAFDLIDTNNRGYLDREQCISLLNELNKYRSLPKTSREDFELIFAELDRSGDFKVTSEEFADLCNTIAIKFQKEPPPSYLEKFPFYHSPLCGRLKSFVRSRMFEYIIVFVLLINLVAVIIETTLDIENSSSQETWQEVEFFLGWIYVAEMALKIFSLGFGAYWMEGQNKFDFVLTWTIFIGETLTFAFPSKLPFLSNGEWIRYLLLGRVLRLTRILLQVQRFRAFVATFFTLMSSLMPYLGIVFCVLCMYCSIGLQIFGGIVYAGNPTLEETDLFNNDYLLFNFNDYPSGMVTLFNLLVMGNWQVWMESYWQLTGTSWSLIYFVSFYLISILLLLNLIVAFVLEAFFAEMELEKGEEVDIQNPTSGGIKKRRSMRVRSKGTMVDILLHHMLSNELDGSQNS.

A disordered region spans residues 1-37 (MSEAEAPLITEEAAERGLASSGSRRLSDGAGGQGSRK). The Cytoplasmic portion of the chain corresponds to 1 to 82 (MSEAEAPLIT…NDTRFGRAMS (82 aa)). A helical membrane pass occupies residues 83–103 (FYFVYLRLDWLWSLNLFALIL). Residues 104–140 (LNFLEKPLWCRKDALQAYDQRDLYFLGQLPYFSKTES) lie on the Extracellular side of the membrane. Residues 141–161 (LIYEGLTLVILVMDIFCPLSY) traverse the membrane as a helical segment. The Cytoplasmic segment spans residues 162 to 176 (EGLNIFWRSTTNKLK). A helical transmembrane segment spans residues 177–197 (IVLLFILACDILVFAFSSQPF). Residues 198-204 (RLAPYIR) lie on the Extracellular side of the membrane. The chain crosses the membrane as a helical; Voltage-sensor span at residues 205-226 (VVFLIMTIRELRMCAITLAGLI). Residues 227 to 247 (GTYLNVLALSLLFLLFASWLA) form a helical membrane-spanning segment. Over 248–258 (YVTFEDTPQGK) the chain is Extracellular. Positions 259 to 273 (TIFSSYGVTLYQMFV) form an intramembrane region, pore-forming. The Extracellular portion of the chain corresponds to 274-296 (LFTTSNNPDVWVHAYKIPRWYSL). The helical transmembrane segment at 297-317 (FFIVYVLLGVYFLTNLILAVI) threads the bilayer. Residues 318–446 (YDSFKEQFAK…SFVRSRMFEY (129 aa)) lie on the Cytoplasmic side of the membrane. EF-hand domains lie at 335-370 (IRKN…LNKY) and 376-411 (TSRE…IAIK). The helical transmembrane segment at 447-467 (IIVFVLLINLVAVIIETTLDI) threads the bilayer. At 468-480 (ENSSSQETWQEVE) the chain is on the extracellular side. N-linked (GlcNAc...) asparagine glycosylation is present at Asn-469. Residues 481 to 501 (FFLGWIYVAEMALKIFSLGFG) traverse the membrane as a helical segment. Over 502-510 (AYWMEGQNK) the chain is Cytoplasmic. A helical membrane pass occupies residues 511–531 (FDFVLTWTIFIGETLTFAFPS). At 532-540 (KLPFLSNGE) the chain is on the extracellular side. The chain crosses the membrane as a helical; Voltage-sensor span at residues 541–558 (WIRYLLLGRVLRLTRILL). Residues 559–582 (QVQRFRAFVATFFTLMSSLMPYLG) are Cytoplasmic-facing. A helical transmembrane segment spans residues 583 to 603 (IVFCVLCMYCSIGLQIFGGIV). Over 604–627 (YAGNPTLEETDLFNNDYLLFNFND) the chain is Extracellular. An intramembrane region (pore-forming) is located at residues 628 to 642 (YPSGMVTLFNLLVMG). At 643-663 (NWQVWMESYWQLTGTSWSLIY) the chain is on the extracellular side. A helical transmembrane segment spans residues 664-684 (FVSFYLISILLLLNLIVAFVL). The Cytoplasmic portion of the chain corresponds to 685 to 742 (EAFFAEMELEKGEEVDIQNPTSGGIKKRRSMRVRSKGTMVDILLHHMLSNELDGSQNS).

Belongs to the calcium channel alpha-1 subunit (TC 1.A.1.11) family. Two pore calcium channel subfamily. In terms of assembly, homodimer.

The protein resides in the membrane. Inhibited by Al(3+). Functionally, functions as a voltage-gated inward-rectifying Ca(2+) channel (VDCC) across the plasma membrane that mediates sucrose-induced Ca(2+) influx in autotrophically grown leaf cells. Acts as the major ROS-responsive Ca(2+) channel and is the possible target of Al-dependent inhibition. Plays a regulatory role in defense responses. The chain is Two pore calcium channel protein 1 (TPC1) from Triticum aestivum (Wheat).